The primary structure comprises 740 residues: NAD(P)H-quinone oxidoreductase subunit 5, chloroplastic (740 aa).

Transmembrane regions (helical) follow at residues 9-29 (WIIPFIPLPVPILLGVGLLLF), 40-60 (WSFLSIFLLSIVMIFSLYLSI), 89-109 (IDPLSCIMVILITTVGIFVLI), 125-145 (FAYMGFFNTSMLGLVTSSNLI), 147-167 (IYFFWELVGMCSYLLIGFWFT), 185-205 (GDFGLLLGILGLYWVTGSFEF), 221-241 (VNLLFLTLCAFLFFMGPIAKS), 258-278 (TPISALIHAATMVAAGIFLVA), 283-303 (LFIVIPSIMYIISLIGIITIL), 327-347 (LGYMMLALGMGSYRSALFHLI), 354-374 (ALLFLGSGSIIHSMEALVGYS), 396-416 (TAFLLGTLSLCGIPPLACFWS), 425-445 (LLFSPIFAIIACSTAGLTAFY), 547-567 (ILFPMLVLLLFTLFIGAIGIP), 606-626 (FSVSIAFFGIFIAYWLYKPFY), and 718-738 (ISSYLFLYLSYVSLFFLFLKI).

Belongs to the complex I subunit 5 family. NDH is composed of at least 16 different subunits, 5 of which are encoded in the nucleus.

Its subcellular location is the plastid. It localises to the chloroplast thylakoid membrane. It carries out the reaction a plastoquinone + NADH + (n+1) H(+)(in) = a plastoquinol + NAD(+) + n H(+)(out). It catalyses the reaction a plastoquinone + NADPH + (n+1) H(+)(in) = a plastoquinol + NADP(+) + n H(+)(out). In terms of biological role, NDH shuttles electrons from NAD(P)H:plastoquinone, via FMN and iron-sulfur (Fe-S) centers, to quinones in the photosynthetic chain and possibly in a chloroplast respiratory chain. The immediate electron acceptor for the enzyme in this species is believed to be plastoquinone. Couples the redox reaction to proton translocation, and thus conserves the redox energy in a proton gradient. This chain is NAD(P)H-quinone oxidoreductase subunit 5, chloroplastic (ndhF), found in Aethionema grandiflorum (Persian stone-cress).